The primary structure comprises 205 residues: Urease accessory protein UreG (205 aa).

12 to 19 (GPVGSGKT) contributes to the GTP binding site.

It belongs to the SIMIBI class G3E GTPase family. UreG subfamily. Homodimer. UreD, UreF and UreG form a complex that acts as a GTP-hydrolysis-dependent molecular chaperone, activating the urease apoprotein by helping to assemble the nickel containing metallocenter of UreC. The UreE protein probably delivers the nickel.

It localises to the cytoplasm. Facilitates the functional incorporation of the urease nickel metallocenter. This process requires GTP hydrolysis, probably effectuated by UreG. This chain is Urease accessory protein UreG, found in Pseudomonas savastanoi pv. phaseolicola (strain 1448A / Race 6) (Pseudomonas syringae pv. phaseolicola (strain 1448A / Race 6)).